Here is a 697-residue protein sequence, read N- to C-terminus: Elongation factor G (697 aa).

Residues 8-283 (ERCRNIGIMA…AVVDYLPSPL (276 aa)) form the tr-type G domain. Residues 17 to 24 (AHIDAGKT), 81 to 85 (DTPGH), and 135 to 138 (NKID) contribute to the GTP site.

It belongs to the TRAFAC class translation factor GTPase superfamily. Classic translation factor GTPase family. EF-G/EF-2 subfamily.

It localises to the cytoplasm. Functionally, catalyzes the GTP-dependent ribosomal translocation step during translation elongation. During this step, the ribosome changes from the pre-translocational (PRE) to the post-translocational (POST) state as the newly formed A-site-bound peptidyl-tRNA and P-site-bound deacylated tRNA move to the P and E sites, respectively. Catalyzes the coordinated movement of the two tRNA molecules, the mRNA and conformational changes in the ribosome. This Koribacter versatilis (strain Ellin345) protein is Elongation factor G.